We begin with the raw amino-acid sequence, 346 residues long: D-alanine--D-alanine ligase A (346 aa).

One can recognise an ATP-grasp domain in the interval 138–332 (KRLFLAAGVE…FAELCERICR (195 aa)). Residue 164 to 217 (QLGFPLVVKPNSQGSTVGLSIVHSQAELQPAIELAGRYGDEVMLERFVAGREVT) participates in ATP binding. Mg(2+)-binding residues include aspartate 286, glutamate 299, and asparagine 301.

The protein belongs to the D-alanine--D-alanine ligase family. Mg(2+) serves as cofactor. The cofactor is Mn(2+).

Its subcellular location is the cytoplasm. The catalysed reaction is 2 D-alanine + ATP = D-alanyl-D-alanine + ADP + phosphate + H(+). The protein operates within cell wall biogenesis; peptidoglycan biosynthesis. Functionally, cell wall formation. This chain is D-alanine--D-alanine ligase A, found in Pseudomonas aeruginosa (strain ATCC 15692 / DSM 22644 / CIP 104116 / JCM 14847 / LMG 12228 / 1C / PRS 101 / PAO1).